A 40-amino-acid chain; its full sequence is Ribosome-inactivating protein saporin-1 (40 aa).

The protein belongs to the ribosome-inactivating protein family. Type 1 RIP subfamily.

The catalysed reaction is Endohydrolysis of the N-glycosidic bond at one specific adenosine on the 28S rRNA.. Its function is as follows. Ribosome-inactivating protein of type 1, inhibits protein synthesis in animal cells. The polypeptide is Ribosome-inactivating protein saporin-1 (SAP1) (Saponaria officinalis (Common soapwort)).